The sequence spans 247 residues: tRNA pseudouridine synthase A (247 aa).

Asp-52 (nucleophile) is an active-site residue. Residue Tyr-111 participates in substrate binding.

This sequence belongs to the tRNA pseudouridine synthase TruA family. Homodimer.

It carries out the reaction uridine(38/39/40) in tRNA = pseudouridine(38/39/40) in tRNA. Formation of pseudouridine at positions 38, 39 and 40 in the anticodon stem and loop of transfer RNAs. In Erythrobacter litoralis (strain HTCC2594), this protein is tRNA pseudouridine synthase A.